Here is a 63-residue protein sequence, read N- to C-terminus: MASLKFPLEILAVFVIISVILLPIAQSHSSSPAPAPTSDGTSIDQGIAYVLMMVALALTYFIH.

An N-terminal signal peptide occupies residues 1 to 27; sequence MASLKFPLEILAVFVIISVILLPIAQS. 4-hydroxyproline occurs at positions 32, 34, and 36. O-linked (Ara...) hydroxyproline glycosylation is found at P32, P34, and P36. Residue S38 is the site of GPI-anchor amidated serine attachment. A propeptide spans 39-63 (removed in mature form); sequence DGTSIDQGIAYVLMMVALALTYFIH.

This sequence belongs to the AG-peptide AGP family. Contains 4-hydroxyproline; hydroxylated on Pro-32, Pro-34 and Pro-36. Post-translationally, O-glycosylated on hydroxyprolines; noncontiguous hydroxylproline residues are glycosylated with arabinogalactan.

The protein resides in the cell membrane. Proteoglycan that seems to be implicated in diverse developmental roles such as differentiation, cell-cell recognition, embryogenesis and programmed cell death. The polypeptide is Arabinogalactan protein 22 (Arabidopsis thaliana (Mouse-ear cress)).